A 146-amino-acid polypeptide reads, in one-letter code: Large ribosomal subunit protein uL15 (146 aa).

Residues 1 to 13 (MKLHELKAAEGSR) are compositionally biased toward basic and acidic residues. Positions 1–61 (MKLHELKAAE…GGQTPLFRRM (61 aa)) are disordered. 2 stretches are compositionally biased toward gly residues: residues 23 to 35 (TSSG…GRGQ) and 42 to 52 (SGGGVRLGFEG).

It belongs to the universal ribosomal protein uL15 family. As to quaternary structure, part of the 50S ribosomal subunit.

Binds to the 23S rRNA. The protein is Large ribosomal subunit protein uL15 of Streptococcus uberis (strain ATCC BAA-854 / 0140J).